The primary structure comprises 80 residues: Type VII secretion system accessory factor EsaB (80 aa).

The protein belongs to the EsaB family.

The protein localises to the cytoplasm. Its function is as follows. Seems to regulate secreted factors that contribute to the establishment of persistent infections in the host. This is Type VII secretion system accessory factor EsaB from Staphylococcus aureus (strain COL).